Consider the following 952-residue polypeptide: Valine--tRNA ligase (952 aa).

Residues 45 to 55 (PNVTGSLHMGH) carry the 'HIGH' region motif. Positions 571–575 (KMSKS) match the 'KMSKS' region motif. Lys574 provides a ligand contact to ATP. Residues 894-950 (KEIAKADADIARVDLKLADQNFIANAPGEIVEDEKEKREAAAARKAKFVEALERLKA) are a coiled coil.

This sequence belongs to the class-I aminoacyl-tRNA synthetase family. ValS type 1 subfamily. As to quaternary structure, monomer.

It is found in the cytoplasm. The enzyme catalyses tRNA(Val) + L-valine + ATP = L-valyl-tRNA(Val) + AMP + diphosphate. In terms of biological role, catalyzes the attachment of valine to tRNA(Val). As ValRS can inadvertently accommodate and process structurally similar amino acids such as threonine, to avoid such errors, it has a 'posttransfer' editing activity that hydrolyzes mischarged Thr-tRNA(Val) in a tRNA-dependent manner. The sequence is that of Valine--tRNA ligase from Nitrobacter winogradskyi (strain ATCC 25391 / DSM 10237 / CIP 104748 / NCIMB 11846 / Nb-255).